Consider the following 64-residue polypeptide: Temporin-ALe (64 aa).

The first 22 residues, 1 to 22 (MFTLKKSLLLLFFLGTINLSLC), serve as a signal peptide directing secretion. Positions 23 to 47 (EQERNAEEERRDEPDERNAEVEKRF) are excised as a propeptide. Leu-62 is modified (leucine amide).

Expressed by the skin glands.

The protein localises to the secreted. In terms of biological role, antimicrobial peptide with activity against Gram-positive and Gram-negative bacteria and against fungi. Has been tested against S.aureus (MIC=1.25 ug/mL), B.pumilus (MIC=5.0 ug/mL), B.cereus (MIC=15.0 ug/mL), E.coli (MIC=1.25 ug/mL), B.dysenteriae (MIC=5.0 ug/mL), A.cacoaceticus (MIC=15.0 ug/mL), P.aeruginosa (MIC=5.0 ug/mL) and C.albicans (MIC=1.25 ug/mL). Also shows a weak hemolytic activity. This Amolops loloensis (Lolokou Sucker Frog) protein is Temporin-ALe.